A 95-amino-acid chain; its full sequence is Small ribosomal subunit protein uS19 (95 aa).

The tract at residues 76 to 95 is disordered; it reads PTRRFGGHADKKAKKGELKK. The span at 82-95 shows a compositional bias: basic and acidic residues; that stretch reads GHADKKAKKGELKK.

Belongs to the universal ribosomal protein uS19 family.

Functionally, protein S19 forms a complex with S13 that binds strongly to the 16S ribosomal RNA. This chain is Small ribosomal subunit protein uS19 (rpsS), found in Thermotoga maritima (strain ATCC 43589 / DSM 3109 / JCM 10099 / NBRC 100826 / MSB8).